A 680-amino-acid polypeptide reads, in one-letter code: Translation factor GUF1 homolog, chloroplastic (680 aa).

The transit peptide at Met-1 to Val-51 directs the protein to the chloroplast. Positions Ser-83–Cys-264 constitute a tr-type G domain. GTP is bound by residues Ala-92–Ser-99, Asp-157–His-161, and Asn-211–Asp-214.

This sequence belongs to the TRAFAC class translation factor GTPase superfamily. Classic translation factor GTPase family. LepA subfamily.

The protein localises to the plastid. It localises to the chloroplast. The enzyme catalyses GTP + H2O = GDP + phosphate + H(+). Its function is as follows. Promotes chloroplast protein synthesis. May act as a fidelity factor of the translation reaction, by catalyzing a one-codon backward translocation of tRNAs on improperly translocated ribosomes. The protein is Translation factor GUF1 homolog, chloroplastic of Vitis vinifera (Grape).